Reading from the N-terminus, the 82-residue chain is ATP synthase subunit c, chloroplastic (82 aa).

2 helical membrane passes run 3–23 (PLICAASVVGAGLAIGLGAIG) and 57–77 (LAFMEALTIYGLVVALALMFA).

Belongs to the ATPase C chain family. F-type ATPases have 2 components, F(1) - the catalytic core - and F(0) - the membrane proton channel. F(1) has five subunits: alpha(3), beta(3), gamma(1), delta(1), epsilon(1). F(0) has four main subunits: a(1), b(1), b'(1) and c(10-14). The alpha and beta chains form an alternating ring which encloses part of the gamma chain. F(1) is attached to F(0) by a central stalk formed by the gamma and epsilon chains, while a peripheral stalk is formed by the delta, b and b' chains.

It is found in the plastid. It localises to the chloroplast thylakoid membrane. In terms of biological role, f(1)F(0) ATP synthase produces ATP from ADP in the presence of a proton or sodium gradient. F-type ATPases consist of two structural domains, F(1) containing the extramembraneous catalytic core and F(0) containing the membrane proton channel, linked together by a central stalk and a peripheral stalk. During catalysis, ATP synthesis in the catalytic domain of F(1) is coupled via a rotary mechanism of the central stalk subunits to proton translocation. Functionally, key component of the F(0) channel; it plays a direct role in translocation across the membrane. A homomeric c-ring of between 10-14 subunits forms the central stalk rotor element with the F(1) delta and epsilon subunits. In Ostreococcus tauri, this protein is ATP synthase subunit c, chloroplastic.